The sequence spans 213 residues: Large ribosomal subunit protein uL3 (213 aa).

Q151 bears the N5-methylglutamine mark.

Belongs to the universal ribosomal protein uL3 family. In terms of assembly, part of the 50S ribosomal subunit. Forms a cluster with proteins L14 and L19. Methylated by PrmB.

Its function is as follows. One of the primary rRNA binding proteins, it binds directly near the 3'-end of the 23S rRNA, where it nucleates assembly of the 50S subunit. This Rhizobium etli (strain CIAT 652) protein is Large ribosomal subunit protein uL3.